A 341-amino-acid chain; its full sequence is Cell wall mannoprotein PIR1 (341 aa).

An N-terminal signal peptide occupies residues Met1 to Ala18. The propeptide occupies Ala19–Arg63. PIR1/2/3 repeat units lie at residues Ala64–Thr82, Ala83–Lys101, Ala102–Thr120, Ala126–Lys144, Ala145–Thr163, Ala164–Thr182, Ala183–Thr201, and Val202–Ser220.

It belongs to the PIR protein family. Post-translationally, covalently linked to beta-1,3-glucan of the inner cell wall layer via an alkali-sensitive ester linkage between the gamma-carboxyl group of glutamic acids, arising from specific glutamines within the PIR1/2/3 repeats, and hydroxyl groups of glucoses of beta-1,3-glucan chains. O-glycosylated. Extensively O-mannosylated.

It localises to the secreted. The protein localises to the cell wall. Its function is as follows. Component of the outer cell wall layer. Required for stability of the cell wall and for optimal growth. Required for resistance against several antifungal and cell wall-perturbing agents and for tolerance to heat shock. The sequence is that of Cell wall mannoprotein PIR1 (PIR1) from Saccharomyces cerevisiae (strain YJM789) (Baker's yeast).